Here is a 331-residue protein sequence, read N- to C-terminus: Cilia- and flagella-associated protein 119 (331 aa).

Position 34 is a phosphoserine (Ser-34). 2 disordered regions span residues Leu-236–Glu-271 and Ser-309–Lys-331. Residues Val-286–Arg-317 adopt a coiled-coil conformation.

The protein localises to the cell projection. Its subcellular location is the cilium. The protein resides in the flagellum. It localises to the cytoplasmic vesicle. It is found in the secretory vesicle. The protein localises to the acrosome. Its subcellular location is the cytoplasm. This chain is Cilia- and flagella-associated protein 119, found in Homo sapiens (Human).